Reading from the N-terminus, the 611-residue chain is Leukotriene A-4 hydrolase (611 aa).

N6-acetyllysine is present on K73. A peptide contacts are provided by residues 135 to 137 and 267 to 272; these read QCQ and PYGGME. Zn(2+) is bound at residue H296. E297 functions as the Proton acceptor in the catalytic mechanism. 2 residues coordinate Zn(2+): H300 and E319. K337 is subject to N6-acetyllysine. The Proton donor role is filled by Y384. An N6-acetyllysine modification is found at K414. At S416 the chain carries Phosphoserine. A peptide is bound at residue 564–566; sequence RMK. Position 573 is an N6-acetyllysine (K573).

It belongs to the peptidase M1 family. As to quaternary structure, monomer. Zn(2+) is required as a cofactor. In terms of processing, phosphorylation at Ser-416 inhibits leukotriene-A4 hydrolase activity. activity.

It localises to the cytoplasm. It carries out the reaction leukotriene A4 + H2O = leukotriene B4. It catalyses the reaction (5S,6S)-epoxy-(18R)-hydroxy-(7E,9E,11Z,14Z,16E)-eicosapentaenoate + H2O = resolvin E1. The enzyme catalyses (5S,6S)-epoxy-(18S)-hydroxy-(7E,9E,11Z,14Z,16E)-eicosapentaenoate + H2O = 18S-resolvin E1. The catalysed reaction is Release of the N-terminal residue from a tripeptide.. Its pathway is lipid metabolism; leukotriene B4 biosynthesis. Its activity is regulated as follows. Inhibited by bestatin. The epoxide hydrolase activity is restrained by suicide inactivation that involves binding of LTA4 to Tyr-379. 4-(4-benzylphenyl)thiazol-2-amine (ARM1) selectively inhibits the epoxide hydrolase activity. Its function is as follows. Bifunctional zinc metalloenzyme that comprises both epoxide hydrolase (EH) and aminopeptidase activities. Acts as an epoxide hydrolase to catalyze the conversion of LTA4 to the pro-inflammatory mediator leukotriene B4 (LTB4). Also has aminopeptidase activity, with high affinity for N-terminal arginines of various synthetic tripeptides. In addition to its pro-inflammatory EH activity, may also counteract inflammation by its aminopeptidase activity, which inactivates by cleavage another neutrophil attractant, the tripeptide Pro-Gly-Pro (PGP), a bioactive fragment of collagen generated by the action of matrix metalloproteinase-9 (MMP9) and prolylendopeptidase (PREPL). Involved also in the biosynthesis of resolvin E1 and 18S-resolvin E1 from eicosapentaenoic acid, two lipid mediators that show potent anti-inflammatory and pro-resolving actions. In Bos taurus (Bovine), this protein is Leukotriene A-4 hydrolase (LTA4H).